Reading from the N-terminus, the 592-residue chain is Aspartate--tRNA ligase (592 aa).

Glutamate 173 provides a ligand contact to L-aspartate. Residues 197 to 200 (QLFK) form an aspartate region. Residue arginine 219 coordinates L-aspartate. ATP contacts are provided by residues 219-221 (RDE) and glutamine 228. L-aspartate is bound at residue histidine 449. Glutamate 483 contacts ATP. Position 490 (arginine 490) interacts with L-aspartate. 535-538 (GLDR) serves as a coordination point for ATP.

Belongs to the class-II aminoacyl-tRNA synthetase family. Type 1 subfamily. In terms of assembly, homodimer.

The protein localises to the cytoplasm. It carries out the reaction tRNA(Asp) + L-aspartate + ATP = L-aspartyl-tRNA(Asp) + AMP + diphosphate. In terms of biological role, catalyzes the attachment of L-aspartate to tRNA(Asp) in a two-step reaction: L-aspartate is first activated by ATP to form Asp-AMP and then transferred to the acceptor end of tRNA(Asp). The chain is Aspartate--tRNA ligase from Shewanella loihica (strain ATCC BAA-1088 / PV-4).